Reading from the N-terminus, the 235-residue chain is uncharacterized protein (235 aa).

To E.coli YbeR.

This is an uncharacterized protein from Escherichia coli (strain K12).